A 506-amino-acid polypeptide reads, in one-letter code: EPTC-inducible aldehyde dehydrogenase (506 aa).

219-225 is a binding site for NAD(+); it reads GFGVEAG. Residues glutamate 263 and cysteine 302 contribute to the active site.

Belongs to the aldehyde dehydrogenase family.

The catalysed reaction is an aldehyde + NAD(+) + H2O = a carboxylate + NADH + 2 H(+). In terms of biological role, degrades all aldehydes potentially generated by N dealkylation of thiocarbamates and may also participate in ethanolamine metabolism and further assimilation of degradation products by thiocarbamate-induced cytochrome P-450. The polypeptide is EPTC-inducible aldehyde dehydrogenase (thcA) (Rhodococcus erythropolis (Arthrobacter picolinophilus)).